We begin with the raw amino-acid sequence, 496 residues long: MRSSMFFAVCAAAALQTALSSPIHPRHAHQSFPNTEQWPIATVGKALKQQLPDEELQGILSQVSQDNIEATIRKLASFGTRHTLSSQTDPARGIGAARTWLTEQFQEAADASEGRMTVDWNSFVKYPGDNERIIFPVNITNIVTTLKGSEDPDRLYVTGGHYDSRNSNPIDYQGDAPGAVDVSNSCYTNWVWEDASGVAVSLELARIFAKYQPKTTIVFTAFAGEEQGLLGAENLAQTYKNNSVNVAGMINLDMVGNSKAEDGTSDPYNIRLFCQGTPLTENSTTTTSRLSIGGDNDSPARNLGRHIYEVASNAFTEMTVRLIYRLDRYSRGGDHRPFLEAGYTGVRFVQPNEDYTQQHQNVTVRNGKQYGDLVEWLDFEYNTRAAKVVASTMWSLANAPGEPMNVGINTTTSDNFSQFKWTAPKGLPVEGYEIVYRETLEPHWTSVIEVGDVNWYNLTSATIHKDNVIFGVRSVGKGGYRSPAVLPFPFGCTRNC.

The N-terminal stretch at Met1–Ser20 is a signal peptide. N-linked (GlcNAc...) asparagine glycosylation occurs at Asn138. Positions 161, 181, and 226 each coordinate Zn(2+). A glycan (N-linked (GlcNAc...) asparagine) is linked at Asn241. Asp253 is a binding site for Zn(2+). 5 N-linked (GlcNAc...) asparagine glycosylation sites follow: Asn282, Asn361, Asn409, Asn415, and Asn457. Positions Glu402–Cys496 constitute a Fibronectin type-III domain.

The protein belongs to the peptidase M28 family. M28B subfamily. Zn(2+) is required as a cofactor.

The protein localises to the secreted. The protein is Probable zinc metalloprotease SNOG_06590 of Phaeosphaeria nodorum (strain SN15 / ATCC MYA-4574 / FGSC 10173) (Glume blotch fungus).